Reading from the N-terminus, the 151-residue chain is Flavodoxin YqcA (151 aa).

A Flavodoxin-like domain is found at 4–145 (IGIFVGTVYG…ISCPWVEAWA (142 aa)). FMN is bound by residues 10 to 15 (TVYGNA) and 99 to 101 (NFC).

It belongs to the flavodoxin family. MioC subfamily. Monomer. It depends on FMN as a cofactor.

In terms of biological role, probable electron transporter. This Pectobacterium carotovorum subsp. carotovorum (Erwinia carotovora subsp. carotovora) protein is Flavodoxin YqcA.